A 215-amino-acid chain; its full sequence is Cytochrome b6 (215 aa).

A helical membrane pass occupies residues 32–52 (IFYCLGGITLTCFIIQVATGF). Cys35 is a heme c binding site. Heme b contacts are provided by His86 and His100. 3 helical membrane passes run 90–110 (ASMMVLMMILHVFRVYLTGGF), 116–136 (LTWVTGVILGVLTVSFGVTGY), and 186–206 (LHTFVLPLLTAVFMLMHFLMI). Residues His187 and His202 each contribute to the heme b site.

This sequence belongs to the cytochrome b family. PetB subfamily. The 4 large subunits of the cytochrome b6-f complex are cytochrome b6, subunit IV (17 kDa polypeptide, PetD), cytochrome f and the Rieske protein, while the 4 small subunits are PetG, PetL, PetM and PetN. The complex functions as a dimer. Heme b serves as cofactor. The cofactor is heme c.

The protein resides in the plastid. The protein localises to the chloroplast thylakoid membrane. Its function is as follows. Component of the cytochrome b6-f complex, which mediates electron transfer between photosystem II (PSII) and photosystem I (PSI), cyclic electron flow around PSI, and state transitions. The polypeptide is Cytochrome b6 (Zygnema circumcarinatum (Green alga)).